We begin with the raw amino-acid sequence, 142 residues long: Ribosome-binding factor A (142 aa).

The tract at residues D118–E142 is disordered. The segment covering A123–V136 has biased composition (acidic residues).

The protein belongs to the RbfA family. As to quaternary structure, monomer. Binds 30S ribosomal subunits, but not 50S ribosomal subunits or 70S ribosomes.

It localises to the cytoplasm. Functionally, one of several proteins that assist in the late maturation steps of the functional core of the 30S ribosomal subunit. Associates with free 30S ribosomal subunits (but not with 30S subunits that are part of 70S ribosomes or polysomes). Required for efficient processing of 16S rRNA. May interact with the 5'-terminal helix region of 16S rRNA. In Colwellia psychrerythraea (strain 34H / ATCC BAA-681) (Vibrio psychroerythus), this protein is Ribosome-binding factor A.